The following is a 425-amino-acid chain: Type II secretion system protein L (425 aa).

At 1-273 the chain is on the cytoplasmic side; it reads MKIAGKWKRK…DKAWQNTLLP (273 aa). A helical membrane pass occupies residues 274–290; that stretch reads WRGVGIAFACYLLLVVA. The Periplasmic portion of the chain corresponds to 291–425; sequence DAGWAHYQLY…EGRLTLRSQQ (135 aa).

This sequence belongs to the GSP L family. Type II secretion system is composed of four main components: the outer membrane complex, the inner membrane complex, the cytoplasmic secretion ATPase and the periplasm-spanning pseudopilus. Forms homodimers. Interacts with OutM/GspM. Interacts with OutE/GspE and OutF/GspF.

Its subcellular location is the cell inner membrane. Functionally, inner membrane component of the type II secretion system required for the energy-dependent secretion of extracellular factors such as proteases and toxins from the periplasm. Plays a role in the complex assembly and recruits OutM resulting in a stable complex in the inner membrane. Provides thus a link between the energy-providing OutE protein in the cytoplasm and the rest of the T2SS machinery. The chain is Type II secretion system protein L (outL) from Pectobacterium carotovorum subsp. carotovorum (Erwinia carotovora subsp. carotovora).